The sequence spans 112 residues: UPF0102 protein CFF8240_0294 (112 aa).

This sequence belongs to the UPF0102 family.

The sequence is that of UPF0102 protein CFF8240_0294 from Campylobacter fetus subsp. fetus (strain 82-40).